A 70-amino-acid polypeptide reads, in one-letter code: Large ribosomal subunit protein bL33m (70 aa).

It belongs to the bacterial ribosomal protein bL33 family. As to quaternary structure, component of the mitochondrial large ribosomal subunit (mt-LSU). Mature yeast 74S mitochondrial ribosomes consist of a small (37S) and a large (54S) subunit. The 37S small subunit contains a 15S ribosomal RNA (15S mt-rRNA) and 34 different proteins. The 54S large subunit contains a 21S rRNA (21S mt-rRNA) and 46 different proteins. bL33m stabilizes the tRNA acceptor stem in the E-site.

It is found in the mitochondrion. Its function is as follows. Component of the mitochondrial ribosome (mitoribosome), a dedicated translation machinery responsible for the synthesis of mitochondrial genome-encoded proteins, including at least some of the essential transmembrane subunits of the mitochondrial respiratory chain. The mitoribosomes are attached to the mitochondrial inner membrane and translation products are cotranslationally integrated into the membrane. The sequence is that of Large ribosomal subunit protein bL33m (MRPL39) from Saccharomyces cerevisiae (strain ATCC 204508 / S288c) (Baker's yeast).